Reading from the N-terminus, the 382-residue chain is Bestrophin-6 (382 aa).

Transmembrane regions (helical) follow at residues 29 to 49, 68 to 88, 231 to 251, and 265 to 285; these read WKLI…VLAI, FINF…TTIV, LAYP…CAFA, and VIHY…MGWL.

Belongs to the anion channel-forming bestrophin (TC 1.A.46) family. Calcium-sensitive chloride channel subfamily.

The protein resides in the membrane. The sequence is that of Bestrophin-6 (best-6) from Caenorhabditis elegans.